A 198-amino-acid chain; its full sequence is FMN-dependent NADH:quinone oxidoreductase (198 aa).

Residues Ser10 and 16 to 18 (SIS) each bind FMN.

The protein belongs to the azoreductase type 1 family. Homodimer. It depends on FMN as a cofactor.

The catalysed reaction is 2 a quinone + NADH + H(+) = 2 a 1,4-benzosemiquinone + NAD(+). The enzyme catalyses N,N-dimethyl-1,4-phenylenediamine + anthranilate + 2 NAD(+) = 2-(4-dimethylaminophenyl)diazenylbenzoate + 2 NADH + 2 H(+). In terms of biological role, quinone reductase that provides resistance to thiol-specific stress caused by electrophilic quinones. Also exhibits azoreductase activity. Catalyzes the reductive cleavage of the azo bond in aromatic azo compounds to the corresponding amines. The sequence is that of FMN-dependent NADH:quinone oxidoreductase from Mycoplasmopsis pulmonis (strain UAB CTIP) (Mycoplasma pulmonis).